Here is a 679-residue protein sequence, read N- to C-terminus: NADPH--cytochrome P450 reductase (679 aa).

At 1-21 (MADSHGDTGATMPEAAAQEAS) the chain is on the lumenal side. The chain crosses the membrane as a helical span at residues 22-42 (VFSMTDVVLFSLIVGLITYWF). Residues 43–679 (LFRKKKEEVP…KGRYSLDVWS (637 aa)) lie on the Cytoplasmic side of the membrane. Ser-64 carries the post-translational modification Phosphoserine. A Flavodoxin-like domain is found at 81-225 (IVVFYGSQTG…DFITWREQFW (145 aa)). FMN-binding positions include 87–92 (SQTGTA), 139–142 (ATYG), 174–183 (LGNKTYEHFN), and Asp-209. Residues 280 to 522 (KNPFLATVTT…FVRKSQFRLP (243 aa)) enclose the FAD-binding FR-type domain. Residue Arg-299 coordinates NADP(+). FAD is bound by residues Arg-425, 455 to 458 (RYYS), 473 to 475 (CAV), Tyr-479, and 489 to 492 (GVAT). Residues Thr-536, 597 to 598 (SR), 603 to 607 (KVYVQ), and Asp-640 each bind NADP(+). FAD is bound at residue Trp-678.

Belongs to the NADPH--cytochrome P450 reductase family. It in the N-terminal section; belongs to the flavodoxin family. The protein in the C-terminal section; belongs to the flavoprotein pyridine nucleotide cytochrome reductase family. It depends on FAD as a cofactor. FMN is required as a cofactor.

It is found in the endoplasmic reticulum membrane. It catalyses the reaction 2 oxidized [cytochrome P450] + NADPH = 2 reduced [cytochrome P450] + NADP(+) + H(+). Its function is as follows. This enzyme is required for electron transfer from NADP to cytochrome P450 in microsomes. It can also provide electron transfer to heme oxygenase and cytochrome B5. The sequence is that of NADPH--cytochrome P450 reductase from Oryctolagus cuniculus (Rabbit).